A 248-amino-acid chain; its full sequence is Homeobox protein BarH-like 1 (248 aa).

The homeobox DNA-binding region spans 135-194 (GRRSRTVFTELQLMGLEKRFEKQKYLSTPDRIDLAESLGLSQLQVKTWYQNRRMKWKKIV). The segment at 197-248 (GGGLESPTKPKGRPKKNSIPTSEQLSEQERTREADRLSDGGASSLSDANQEE) is disordered. The span at 223–234 (EQERTREADRLS) shows a compositional bias: basic and acidic residues. Residues 237–248 (GASSLSDANQEE) are compositionally biased toward polar residues.

The protein belongs to the BAR homeobox family.

It is found in the nucleus. In terms of biological role, transcription factor, is involved in craniofacial development, and in stomach organogenesis. The polypeptide is Homeobox protein BarH-like 1 (barx1) (Danio rerio (Zebrafish)).